We begin with the raw amino-acid sequence, 217 residues long: 3,4-dihydroxy-2-butanone 4-phosphate synthase (217 aa).

Residues 37–38, D42, 150–154, and E174 each bind D-ribulose 5-phosphate; these read RE and RGGHT. Position 38 (E38) interacts with Mg(2+). H153 contributes to the Mg(2+) binding site.

It belongs to the DHBP synthase family. Homodimer. Mg(2+) serves as cofactor. The cofactor is Mn(2+).

The catalysed reaction is D-ribulose 5-phosphate = (2S)-2-hydroxy-3-oxobutyl phosphate + formate + H(+). The protein operates within cofactor biosynthesis; riboflavin biosynthesis; 2-hydroxy-3-oxobutyl phosphate from D-ribulose 5-phosphate: step 1/1. Its function is as follows. Catalyzes the conversion of D-ribulose 5-phosphate to formate and 3,4-dihydroxy-2-butanone 4-phosphate. This chain is 3,4-dihydroxy-2-butanone 4-phosphate synthase, found in Escherichia fergusonii (strain ATCC 35469 / DSM 13698 / CCUG 18766 / IAM 14443 / JCM 21226 / LMG 7866 / NBRC 102419 / NCTC 12128 / CDC 0568-73).